Reading from the N-terminus, the 392-residue chain is Enoyl-[acyl-carrier-protein] reductase [NADH] (392 aa).

Residues 48–53 (GCSTGY), 74–75 (FE), 111–112 (DA), and 139–140 (LA) each bind NAD(+). Residue Tyr225 participates in substrate binding. Residue Tyr235 is the Proton donor of the active site. NAD(+) contacts are provided by residues Lys244 and 273–275 (LVT).

The protein belongs to the TER reductase family. Monomer.

It carries out the reaction a 2,3-saturated acyl-[ACP] + NAD(+) = a (2E)-enoyl-[ACP] + NADH + H(+). It functions in the pathway lipid metabolism; fatty acid biosynthesis. Involved in the final reduction of the elongation cycle of fatty acid synthesis (FAS II). Catalyzes the reduction of a carbon-carbon double bond in an enoyl moiety that is covalently linked to an acyl carrier protein (ACP). This is Enoyl-[acyl-carrier-protein] reductase [NADH] from Idiomarina loihiensis (strain ATCC BAA-735 / DSM 15497 / L2-TR).